A 268-amino-acid polypeptide reads, in one-letter code: Lipase 1 (268 aa).

The first 29 residues, 1 to 29 (MRRFRLVGFLSSLVLAAGAALTGAATAQA), serve as a signal peptide directing secretion. Serine 44 serves as the catalytic Nucleophile. 3 disulfides stabilise this stretch: cysteine 61–cysteine 86, cysteine 127–cysteine 135, and cysteine 185–cysteine 231. Histidine 250 is an active-site residue.

The protein belongs to the 'GDSL' lipolytic enzyme family. As to quaternary structure, monomer.

It is found in the secreted. The enzyme catalyses a triacylglycerol + H2O = a diacylglycerol + a fatty acid + H(+). Strongly inhibited by Ag(+). The cations Ca(2+), Mg(2+), Co(2+) and Cu(2+) do not significantly reduce the lipolytic activity of SCO1725. Is also inhibited by DTT in vitro, but not by EDTA or by the reagent masking SH-groups, p-hydroxymercuribenzoate (pHMB). Is resistant to PMSF inhibition, except in the presence of Ca(2+). Is also strongly inhibited by 3,4-dichloroisocoumarin (DCI), another inhibitor of serine hydrolases. Addition of tetrahydrofuran and 1,4-dioxane significantly increases (2- and 4- fold, respectively) hydrolytic activity of lipase towards p-nitrophenyl caprylate. Catalyzes the hydrolysis of fatty acid esters with a preference for mid-length acyl chain (C10-C16). Is able to hydrolyze the triacylglycerol triolein and mixed triacylglycerols from a wide range of natural oils; better activity is obtained with corn-, wheat germ- and olive oil that have higher content of linoleic and/or oleic acid (C18:2; C18:1, cis). Tween detergents are also substrates for this enzyme. Displays arylesterase activity towards p-nitrophenyl alkanoate esters and alpha- and beta-naphthyl esters. This Streptomyces coelicolor (strain ATCC BAA-471 / A3(2) / M145) protein is Lipase 1.